The chain runs to 225 residues: NAD(P)H-quinone oxidoreductase subunit K, chloroplastic (225 aa).

[4Fe-4S] cluster contacts are provided by cysteine 43, cysteine 44, cysteine 108, and cysteine 139.

The protein belongs to the complex I 20 kDa subunit family. NDH is composed of at least 16 different subunits, 5 of which are encoded in the nucleus. [4Fe-4S] cluster serves as cofactor.

It localises to the plastid. The protein localises to the chloroplast thylakoid membrane. The catalysed reaction is a plastoquinone + NADH + (n+1) H(+)(in) = a plastoquinol + NAD(+) + n H(+)(out). The enzyme catalyses a plastoquinone + NADPH + (n+1) H(+)(in) = a plastoquinol + NADP(+) + n H(+)(out). In terms of biological role, NDH shuttles electrons from NAD(P)H:plastoquinone, via FMN and iron-sulfur (Fe-S) centers, to quinones in the photosynthetic chain and possibly in a chloroplast respiratory chain. The immediate electron acceptor for the enzyme in this species is believed to be plastoquinone. Couples the redox reaction to proton translocation, and thus conserves the redox energy in a proton gradient. This chain is NAD(P)H-quinone oxidoreductase subunit K, chloroplastic, found in Oenothera argillicola (Appalachian evening primrose).